Reading from the N-terminus, the 169-residue chain is Large ribosomal subunit protein uL15 (169 aa).

Residues 1–13 (MKLNEIRDNEGAT) show a composition bias toward basic and acidic residues. A disordered region spans residues 1 to 40 (MKLNEIRDNEGATKNRMRVGRGIGSGKGKTGGRGVKGQKA). Residues 21–35 (RGIGSGKGKTGGRGV) show a composition bias toward gly residues.

It belongs to the universal ribosomal protein uL15 family. In terms of assembly, part of the 50S ribosomal subunit.

Functionally, binds to the 23S rRNA. The sequence is that of Large ribosomal subunit protein uL15 from Methylorubrum populi (strain ATCC BAA-705 / NCIMB 13946 / BJ001) (Methylobacterium populi).